The primary structure comprises 338 residues: Lipoate-protein ligase A (338 aa).

The region spanning 29 to 216 is the BPL/LPL catalytic domain; sequence PATQRVLFLW…AFFAHYGERV (188 aa). Residues arginine 71, 76 to 79, and lysine 134 each bind ATP; that span reads GAVF. Residue lysine 134 participates in (R)-lipoate binding.

This sequence belongs to the LplA family. As to quaternary structure, monomer.

Its subcellular location is the cytoplasm. It catalyses the reaction L-lysyl-[lipoyl-carrier protein] + (R)-lipoate + ATP = N(6)-[(R)-lipoyl]-L-lysyl-[lipoyl-carrier protein] + AMP + diphosphate + H(+). It participates in protein modification; protein lipoylation via exogenous pathway; protein N(6)-(lipoyl)lysine from lipoate: step 1/2. Its pathway is protein modification; protein lipoylation via exogenous pathway; protein N(6)-(lipoyl)lysine from lipoate: step 2/2. In terms of biological role, catalyzes both the ATP-dependent activation of exogenously supplied lipoate to lipoyl-AMP and the transfer of the activated lipoyl onto the lipoyl domains of lipoate-dependent enzymes. This is Lipoate-protein ligase A from Salmonella typhimurium (strain LT2 / SGSC1412 / ATCC 700720).